A 255-amino-acid chain; its full sequence is Phosphate import ATP-binding protein PstB (255 aa).

The ABC transporter domain occupies 10-250 (INIKDLNLWY…PQMKSTEDYI (241 aa)). 42-49 (GPSGCGKS) lines the ATP pocket.

This sequence belongs to the ABC transporter superfamily. Phosphate importer (TC 3.A.1.7) family. The complex is composed of two ATP-binding proteins (PstB), two transmembrane proteins (PstC and PstA) and a solute-binding protein (PstS).

Its subcellular location is the cell membrane. It carries out the reaction phosphate(out) + ATP + H2O = ADP + 2 phosphate(in) + H(+). In terms of biological role, part of the ABC transporter complex PstSACB involved in phosphate import. Responsible for energy coupling to the transport system. This is Phosphate import ATP-binding protein PstB from Methanococcoides burtonii (strain DSM 6242 / NBRC 107633 / OCM 468 / ACE-M).